Here is a 253-residue protein sequence, read N- to C-terminus: Acidic endochitinase pcht28 (253 aa).

The N-terminal stretch at 1–24 is a signal peptide; sequence MKFNIVSPVALSCLFFLFLTGTLA. Glu-92 acts as the Proton donor in catalysis. Cys-212 and Cys-244 are oxidised to a cystine.

This sequence belongs to the glycosyl hydrolase 19 family. Chitinase class II subfamily.

It localises to the secreted. Its subcellular location is the extracellular space. It carries out the reaction Random endo-hydrolysis of N-acetyl-beta-D-glucosaminide (1-&gt;4)-beta-linkages in chitin and chitodextrins.. Defense against chitin-containing fungal pathogens. The chain is Acidic endochitinase pcht28 from Solanum chilense (Tomato).